A 30-amino-acid chain; its full sequence is Natriuretic peptides A (30 aa).

The propeptide occupies 1-3; it reads APR. Residues Cys11 and Cys27 are joined by a disulfide bond.

Belongs to the natriuretic peptide family. In terms of processing, cleaved upon secretion to produce the functional hormone.

The protein resides in the secreted. Functionally, hormone playing a key role in cardiovascular homeostasis through regulation of natriuresis, diuresis, and vasodilation. Has a cGMP-stimulating activity. The sequence is that of Natriuretic peptides A from Pelophylax ridibundus (Marsh frog).